Consider the following 329-residue polypeptide: 4-diphosphocytidyl-2-C-methyl-D-erythritol kinase (329 aa).

Lys14 is a catalytic residue. 117–127 contributes to the ATP binding site; that stretch reads PSGAGMGGASS. Asp166 is an active-site residue.

The protein belongs to the GHMP kinase family. IspE subfamily.

The enzyme catalyses 4-CDP-2-C-methyl-D-erythritol + ATP = 4-CDP-2-C-methyl-D-erythritol 2-phosphate + ADP + H(+). The protein operates within isoprenoid biosynthesis; isopentenyl diphosphate biosynthesis via DXP pathway; isopentenyl diphosphate from 1-deoxy-D-xylulose 5-phosphate: step 3/6. Catalyzes the phosphorylation of the position 2 hydroxy group of 4-diphosphocytidyl-2C-methyl-D-erythritol. The polypeptide is 4-diphosphocytidyl-2-C-methyl-D-erythritol kinase (Rhodopirellula baltica (strain DSM 10527 / NCIMB 13988 / SH1)).